The sequence spans 335 residues: Phosphatidylcholine:ceramide cholinephosphotransferase 2 (335 aa).

The next 5 membrane-spanning stretches (helical) occupy residues 60 to 80, 104 to 124, 136 to 156, 200 to 220, and 229 to 249; these read LTAF…LTVI, WSVG…IIFL, FLLG…TFLP, ILCG…MYFV, and LVIL…ALVV. His-210 is a catalytic residue. Active-site residues include His-253 and Asp-257. The chain crosses the membrane as a helical span at residues 258–278; sequence VLIAYWLTSHVFWSYHQIFEM. Residues 279-335 lie on the Cytoplasmic side of the membrane; sequence RKDDRPQAPLSRLWWFWLCYWFESDVADGKLVNKWNWPLEGPQRMHTIMNRINYKLQ.

It belongs to the sphingomyelin synthase family.

The protein localises to the membrane. The enzyme catalyses an N-acylsphing-4-enine + a 1,2-diacyl-sn-glycero-3-phosphocholine = a sphingomyelin + a 1,2-diacyl-sn-glycerol. It carries out the reaction an N-acyl-15-methylhexadecasphing-4-enine + a 1,2-diacyl-sn-glycero-3-phosphocholine = an N-acyl-15-methylhexadecasphing-4-enine-1-phosphocholine + a 1,2-diacyl-sn-glycerol. It participates in lipid metabolism; sphingolipid metabolism. Functionally, sphingomyelin synthases (SM synthase or SMS) synthesize the sphingolipid sphingomyelin (SM) through transfer of the phosphatidyl head group of 1,2-diacyl-sn-glycero-3-phosphocholine (phosphatidylcholine, PC) on to the primary hydroxyl of ceramide (N-acylsphingoid base), yielding 1,2-diacyl-sn-glycerol (diacylglycerol, DAG) as a side product. Functions as a bidirectional lipid cholinephosphotransferases capable of converting PC and ceramide to SM and DAG and vice versa depending on the respective levels of ceramide and DAG as phosphocholine acceptors, respectively. The sequence is that of Phosphatidylcholine:ceramide cholinephosphotransferase 2 (sms-2) from Caenorhabditis elegans.